Reading from the N-terminus, the 256-residue chain is Probable ABC transporter ATP-binding protein spyM18_0273 (256 aa).

The region spanning 4-246 (LEINNLHVSI…EKEGYAGIAQ (243 aa)) is the ABC transporter domain. 36–43 (GPNGTGKS) contacts ATP.

The protein belongs to the ABC transporter superfamily. Ycf16 family.

It is found in the cell membrane. The chain is Probable ABC transporter ATP-binding protein spyM18_0273 from Streptococcus pyogenes serotype M18 (strain MGAS8232).